The following is a 373-amino-acid chain: Asporin (373 aa).

Positions Met1–Ala15 are cleaved as a signal peptide. Positions Lys16 to Lys32 are excised as a propeptide. An O-linked (GalNAc...) serine glycan is attached at Ser48. Residues Phe59–Phe95 form the LRRNT domain. 2 cysteine pairs are disulfide-bonded: Cys68/Cys74 and Cys72/Cys81. LRR repeat units lie at residues Asp96 to Gly117, Ser120 to Thr141, Lys144 to Leu166, Ala167 to Gly186, Ala189 to Gly212, Thr235 to Lys255, Glu259 to Asn280, Arg283 to Lys305, Tyr306 to Pro327, Thr328 to Tyr349, and Trp350 to Lys373. The tract at residues Pro159–Ile205 is interaction with TGFB1. Asn275 is a glycosylation site (N-linked (GlcNAc...) asparagine). Cys326 and Cys359 are joined by a disulfide.

Belongs to the small leucine-rich proteoglycan (SLRP) family. SLRP class I subfamily. Interacts with type I collagen. DCN can inhibit collagen binding. Interacts with TGFB1, TGFB2 and TGFB3. DCN, BGN, and FMOD inhibit binding to TGFB1. Interacts with BMP2. Interacts in vitro with type II collagen. In terms of tissue distribution, higher expression in heart, also detected in kidney, stomach, testes, and skin but only weakly in lung, skeletal muscle, small intestine, and thymus. Expressed specifically and predominantly in the periodontal ligament (PDL). During tooth development, strong expression is seen in the dental follicle, which is the progenitor tissue that forms cementum, alveolar bone, and the PDL. Expressed in the perichondria of the maxilla, mandible, vertebrae, and long bones. Predominantly expressed in the perichondrium/periosteum of long bones (at protein level).

It localises to the secreted. The protein localises to the extracellular space. The protein resides in the extracellular matrix. Binds calcium and plays a role in osteoblast-driven collagen biomineralization activity. Critical regulator of TGF-beta in articular cartilage and plays an essential role in cartilage homeostasis and osteoarthritis (OA) pathogenesis. Negatively regulates chondrogenesis in the articular cartilage by blocking the TGF-beta/receptor interaction on the cell surface and inhibiting the canonical TGF-beta/Smad signal. Negatively regulates periodontal ligament (PDL) differentiation and mineralization to ensure that the PDL is not ossified and to maintain homeostasis of the tooth-supporting system. Inhibits BMP2-induced cytodifferentiation of PDL cells by preventing its binding to BMPR1B/BMP type-1B receptor, resulting in inhibition of BMP-dependent activation of SMAD proteins. Inhibits the interaction between TGFB1 and TGF-beta receptor type II in the presence of heparin/heparan sulfate in vitro. This is Asporin (Aspn) from Mus musculus (Mouse).